Consider the following 125-residue polypeptide: Small ribosomal subunit protein uS12 (125 aa).

The interval 9–31 (RQGREVEKIKSKSPAMENSPQRR) is disordered. Asp-89 is modified (3-methylthioaspartic acid). The disordered stretch occupies residues 106 to 125 (GVKDRKQSRSKYGAKRPKKA). Over residues 113 to 125 (SRSKYGAKRPKKA) the composition is skewed to basic residues.

Belongs to the universal ribosomal protein uS12 family. Part of the 30S ribosomal subunit. Contacts proteins S8 and S17. May interact with IF1 in the 30S initiation complex.

With S4 and S5 plays an important role in translational accuracy. Functionally, interacts with and stabilizes bases of the 16S rRNA that are involved in tRNA selection in the A site and with the mRNA backbone. Located at the interface of the 30S and 50S subunits, it traverses the body of the 30S subunit contacting proteins on the other side and probably holding the rRNA structure together. The combined cluster of proteins S8, S12 and S17 appears to hold together the shoulder and platform of the 30S subunit. In Polaromonas sp. (strain JS666 / ATCC BAA-500), this protein is Small ribosomal subunit protein uS12.